The primary structure comprises 234 residues: uncharacterized protein (234 aa).

The next 6 membrane-spanning stretches (helical) occupy residues 5–23 (LFYISAIFVPEAIWLLWSF), 38–60 (IPTAYVTAFISGDALLAVIGFWV), 73–92 (AHIQWIAGYFAFFFVLAHGW), 127–149 (AITLYAMALPTIVPMIAGGYIWL), 170–192 (GVAIYLLGVFVAFLMAACATVIS), and 197–217 (TQAGMLVGVIVTITVAYALAF).

It localises to the cell membrane. This is an uncharacterized protein from Archaeoglobus fulgidus (strain ATCC 49558 / DSM 4304 / JCM 9628 / NBRC 100126 / VC-16).